The chain runs to 195 residues: Imidazoleglycerol-phosphate dehydratase (195 aa).

This sequence belongs to the imidazoleglycerol-phosphate dehydratase family.

It is found in the cytoplasm. The catalysed reaction is D-erythro-1-(imidazol-4-yl)glycerol 3-phosphate = 3-(imidazol-4-yl)-2-oxopropyl phosphate + H2O. Its pathway is amino-acid biosynthesis; L-histidine biosynthesis; L-histidine from 5-phospho-alpha-D-ribose 1-diphosphate: step 6/9. This chain is Imidazoleglycerol-phosphate dehydratase, found in Geobacter sp. (strain M21).